The primary structure comprises 242 residues: Invasion chromosome antigen R (242 aa).

The protein localises to the secreted. In terms of biological role, may contribute to pathogenesis, although some of its characteristics suggest it is a fossil gene. This is Invasion chromosome antigen R from Shigella flexneri serotype 5a (strain M90T).